Consider the following 159-residue polypeptide: Cell number regulator 4 (159 aa).

The helical transmembrane segment at 52-74 (LAGLLYCLLLHAGVAVVPCHCIY) threads the bilayer.

The protein belongs to the cornifelin family. As to expression, expressed in roots, coleoptiles, leaves, stalks, apical meristems, immature ears, endosperm, pericarp and tassel spikelets.

The protein localises to the membrane. The polypeptide is Cell number regulator 4 (CNR4) (Zea mays (Maize)).